The sequence spans 106 residues: Ribosomal protein eL42-like (106 aa).

Positions Y26–K53 are disordered. Residue K53 is modified to N6-methyllysine.

The protein belongs to the eukaryotic ribosomal protein eL42 family. In terms of tissue distribution, ubiquitously expressed.

Its subcellular location is the cytoplasm. The sequence is that of Ribosomal protein eL42-like (RPL36AL) from Homo sapiens (Human).